The sequence spans 249 residues: Probable transcriptional regulatory protein Csal_1845 (249 aa).

This sequence belongs to the TACO1 family.

It localises to the cytoplasm. The protein is Probable transcriptional regulatory protein Csal_1845 of Chromohalobacter salexigens (strain ATCC BAA-138 / DSM 3043 / CIP 106854 / NCIMB 13768 / 1H11).